The chain runs to 451 residues: Phosphoglucosamine mutase (451 aa).

The active-site Phosphoserine intermediate is Ser-103. Residues Ser-103, Asp-243, Asp-245, and Asp-247 each coordinate Mg(2+). A Phosphoserine modification is found at Ser-103.

Belongs to the phosphohexose mutase family. Mg(2+) is required as a cofactor. Activated by phosphorylation.

It carries out the reaction alpha-D-glucosamine 1-phosphate = D-glucosamine 6-phosphate. Its function is as follows. Catalyzes the conversion of glucosamine-6-phosphate to glucosamine-1-phosphate. The polypeptide is Phosphoglucosamine mutase (Lactobacillus gasseri (strain ATCC 33323 / DSM 20243 / BCRC 14619 / CIP 102991 / JCM 1131 / KCTC 3163 / NCIMB 11718 / NCTC 13722 / AM63)).